Reading from the N-terminus, the 271-residue chain is S-adenosylmethionine decarboxylase proenzyme (271 aa).

Residue Ser121 is the Schiff-base intermediate with substrate; via pyruvic acid of the active site. Ser121 carries the post-translational modification Pyruvic acid (Ser); by autocatalysis. Catalysis depends on His126, which acts as the Proton acceptor; for processing activity. Cys149 (proton donor; for catalytic activity) is an active-site residue.

It belongs to the prokaryotic AdoMetDC family. Type 2 subfamily. In terms of assembly, heterooctamer of four alpha and four beta chains arranged as a tetramer of alpha/beta heterodimers. The cofactor is pyruvate. In terms of processing, is synthesized initially as an inactive proenzyme. Formation of the active enzyme involves a self-maturation process in which the active site pyruvoyl group is generated from an internal serine residue via an autocatalytic post-translational modification. Two non-identical subunits are generated from the proenzyme in this reaction, and the pyruvate is formed at the N-terminus of the alpha chain, which is derived from the carboxyl end of the proenzyme. The post-translation cleavage follows an unusual pathway, termed non-hydrolytic serinolysis, in which the side chain hydroxyl group of the serine supplies its oxygen atom to form the C-terminus of the beta chain, while the remainder of the serine residue undergoes an oxidative deamination to produce ammonia and the pyruvoyl group blocking the N-terminus of the alpha chain.

The enzyme catalyses S-adenosyl-L-methionine + H(+) = S-adenosyl 3-(methylsulfanyl)propylamine + CO2. The protein operates within amine and polyamine biosynthesis; S-adenosylmethioninamine biosynthesis; S-adenosylmethioninamine from S-adenosyl-L-methionine: step 1/1. Its function is as follows. Catalyzes the decarboxylation of S-adenosylmethionine to S-adenosylmethioninamine (dcAdoMet), the propylamine donor required for the synthesis of the polyamines spermine and spermidine from the diamine putrescine. The protein is S-adenosylmethionine decarboxylase proenzyme of Clostridium perfringens (strain ATCC 13124 / DSM 756 / JCM 1290 / NCIMB 6125 / NCTC 8237 / Type A).